Consider the following 631-residue polypeptide: NADPH oxidoreductase A (631 aa).

The Flavodoxin-like domain occupies 73–212; it reads ILILYGTEYG…CFDRYIDTVC (140 aa). FMN contacts are provided by residues 79 to 83 and 160 to 191; these read TEYGL and VLAL…KRFR. The region spanning 247–480 is the FAD-binding FR-type domain; sequence KKPYSSKLLV…INNNPDFRLP (234 aa). 249–299 contacts FAD; the sequence is PYSSKLLVKRVLTKGDKVGIHLEFELGDSELKYVPGDALAILPDNAASEVS. 504–630 contributes to the NADP(+) binding site; it reads QERKALGHTG…KEKRYQKDVW (127 aa).

Requires FAD as cofactor. The cofactor is FMN.

Functionally, probable NADPH oxidoreductase that controls development beyond the mound stage. This chain is NADPH oxidoreductase A (redA), found in Dictyostelium discoideum (Social amoeba).